Reading from the N-terminus, the 465-residue chain is E3 ubiquitin-protein ligase ORTHRUS-LIKE 1 (465 aa).

The segment at 31–69 (TSLSSPLDRSGDVDPLPVSDESGGSKADESMTDADETKK) is disordered. The RING-type zinc finger occupies 109 to 148 (CSLCNQLPDRPVTILCGHNFCLKCFDKWIDQGNQICATCR). The YDG domain occupies 233–374 (VRNQGVLVGE…FKVCRYLFVR (142 aa)). The helical transmembrane segment at 442 to 462 (MAMTCLLLFVLIILVGSSSIL) threads the bilayer.

It localises to the nucleus. The protein localises to the membrane. The catalysed reaction is S-ubiquitinyl-[E2 ubiquitin-conjugating enzyme]-L-cysteine + [acceptor protein]-L-lysine = [E2 ubiquitin-conjugating enzyme]-L-cysteine + N(6)-ubiquitinyl-[acceptor protein]-L-lysine.. The protein operates within protein modification; protein ubiquitination. E3 ubiquitin-protein ligase. May participate in methylation-dependent transcriptional regulation. Mediates ubiquitination with the E2 ubiquitin-conjugating enzyme UBC11. The polypeptide is E3 ubiquitin-protein ligase ORTHRUS-LIKE 1 (ORTHL) (Arabidopsis thaliana (Mouse-ear cress)).